A 430-amino-acid polypeptide reads, in one-letter code: Aspartate aminotransferase, mitochondrial (430 aa).

The N-terminal 29 residues, 1–29 (MALLHSGRVLSGIAAAFHPGLAAAASARA), are a transit peptide targeting the mitochondrion. Phosphothreonine is present on threonine 48. N6-acetyllysine is present on lysine 59. Residue glycine 65 participates in substrate binding. Lysine 73 bears the N6-acetyllysine; alternate mark. Residue lysine 73 is modified to N6-succinyllysine; alternate. An N6-acetyllysine modification is found at lysine 82. An N6-acetyllysine; alternate modification is found at lysine 90. Lysine 90 bears the N6-succinyllysine; alternate mark. Tyrosine 96 is subject to 3'-nitrotyrosine; alternate. A Phosphotyrosine; alternate modification is found at tyrosine 96. Lysine 107 and lysine 122 each carry N6-acetyllysine; alternate. N6-succinyllysine; alternate is present on residues lysine 107 and lysine 122. The residue at position 143 (serine 143) is a Phosphoserine. N6-acetyllysine; alternate is present on lysine 159. Lysine 159 is modified (N6-succinyllysine; alternate). Residue tryptophan 162 coordinates substrate. N6-acetyllysine; alternate is present on lysine 185. Lysine 185 carries the post-translational modification N6-succinyllysine; alternate. Asparagine 215 contributes to the substrate binding site. An N6-succinyllysine modification is found at lysine 227. Lysine 234 carries the post-translational modification N6-acetyllysine. N6-acetyllysine; alternate is present on residues lysine 279 and lysine 296. Residue lysine 279 is modified to N6-(pyridoxal phosphate)lysine; alternate. An N6-succinyllysine; alternate modification is found at lysine 296. Position 302 is an N6-acetyllysine (lysine 302). Position 309 is an N6-acetyllysine; alternate (lysine 309). Residue lysine 309 is modified to N6-succinyllysine; alternate. Position 313 is an asymmetric dimethylarginine (arginine 313). Threonine 333 carries the post-translational modification Phosphothreonine. At lysine 338 the chain carries N6-acetyllysine; alternate. Lysine 338 carries the post-translational modification N6-succinyllysine; alternate. N6-acetyllysine is present on lysine 345. Lysine 363 carries the post-translational modification N6-acetyllysine; alternate. An N6-succinyllysine; alternate modification is found at lysine 363. Residues lysine 364 and lysine 387 each carry the N6-acetyllysine modification. An N6-acetyllysine; alternate mark is found at lysine 396 and lysine 404. Residues lysine 396 and lysine 404 each carry the N6-succinyllysine; alternate modification. A substrate-binding site is contributed by arginine 407.

The protein belongs to the class-I pyridoxal-phosphate-dependent aminotransferase family. Homodimer. It depends on pyridoxal 5'-phosphate as a cofactor.

It localises to the mitochondrion matrix. It is found in the cell membrane. The enzyme catalyses L-aspartate + 2-oxoglutarate = oxaloacetate + L-glutamate. It carries out the reaction L-kynurenine + 2-oxoglutarate = kynurenate + L-glutamate + H2O. Catalyzes the irreversible transamination of the L-tryptophan metabolite L-kynurenine to form kynurenic acid (KA). As a member of the malate-aspartate shuttle, it has a key role in the intracellular NAD(H) redox balance. Is important for metabolite exchange between mitochondria and cytosol, and for amino acid metabolism. Facilitates cellular uptake of long-chain free fatty acids. This Macaca fascicularis (Crab-eating macaque) protein is Aspartate aminotransferase, mitochondrial (GOT2).